The sequence spans 190 residues: UPF0301 protein Pfl01_5311 (190 aa).

This sequence belongs to the UPF0301 (AlgH) family.

This chain is UPF0301 protein Pfl01_5311, found in Pseudomonas fluorescens (strain Pf0-1).